We begin with the raw amino-acid sequence, 279 residues long: Putative ABC transporter ATP-binding protein CA_C1368 (279 aa).

The ABC transporter domain maps to 4–239 (ISINNVDYIY…KKVLRNINLR (236 aa)). 37–44 (GPNGAGKS) serves as a coordination point for ATP.

It belongs to the ABC transporter superfamily.

It is found in the cell membrane. Its function is as follows. Probably part of an ABC transporter complex. Responsible for energy coupling to the transport system. The chain is Putative ABC transporter ATP-binding protein CA_C1368 from Clostridium acetobutylicum (strain ATCC 824 / DSM 792 / JCM 1419 / IAM 19013 / LMG 5710 / NBRC 13948 / NRRL B-527 / VKM B-1787 / 2291 / W).